We begin with the raw amino-acid sequence, 853 residues long: Rod cGMP-specific 3',5'-cyclic phosphodiesterase subunit beta (853 aa).

Position 2 is an N-acetylserine (serine 2). GAF domains follow at residues 71-220 (NMER…TLNL) and 252-429 (DIER…GWSV). The region spanning 481–814 (EEDELGKILK…KEWKALADEY (334 aa)) is the PDEase domain. The active-site Proton donor is the histidine 557. Positions 561, 597, 598, and 718 each coordinate a divalent metal cation. Cysteine 850 bears the Cysteine methyl ester mark. Cysteine 850 carries S-geranylgeranyl cysteine lipidation. Positions 851-853 (RIL) are cleaved as a propeptide — removed in mature form.

This sequence belongs to the cyclic nucleotide phosphodiesterase family. Oligomer composed of two catalytic chains (alpha and beta), an inhibitory chain (gamma) and the delta chain. A divalent metal cation is required as a cofactor.

Its subcellular location is the membrane. The protein resides in the cell projection. The protein localises to the cilium. It is found in the photoreceptor outer segment. The catalysed reaction is 3',5'-cyclic GMP + H2O = GMP + H(+). In terms of biological role, necessary for the formation of a functional phosphodiesterase holoenzyme. Involved in retinal circadian rhythm photoentrainment via modulation of UVA and orange light-induced phase-shift of the retina clock. May participate in processes of transmission and amplification of the visual signal. Its function is as follows. Rod-specific cGMP phosphodiesterase that catalyzes the hydrolysis of 3',5'-cyclic GMP. Necessary for the formation of a functional phosphodiesterase holoenzyme. Involved in retinal circadian rhythm photoentrainment via modulation of UVA and orange light-induced phase-shift of the retina clock. May participate in processes of transmission and amplification of the visual signal. This chain is Rod cGMP-specific 3',5'-cyclic phosphodiesterase subunit beta (PDE6B), found in Bos taurus (Bovine).